Reading from the N-terminus, the 79-residue chain is MSDFWHKLGCCVVEKPQPKKKRKRIDRSMIGEPMNFVHLTHVGSGDMGAGDGLPMAGTVQQQMRSKCGRDRQWSNSRVL.

2 S-palmitoyl cysteine lipidation sites follow: cysteine 10 and cysteine 11. A CRIB domain is found at isoleucine 30–glycine 43.

It belongs to the CDC42SE/SPEC family.

Its subcellular location is the cytoplasm. The protein localises to the cytoskeleton. It localises to the cell membrane. In terms of biological role, probably involved in the organization of the actin cytoskeleton by acting downstream of CDC42, inducing actin filament assembly. This is CDC42 small effector protein 1-A (cdc42se1-a) from Xenopus laevis (African clawed frog).